Here is a 190-residue protein sequence, read N- to C-terminus: Threonylcarbamoyl-AMP synthase (190 aa).

The region spanning 9–190 (FLQLALARQT…IDIVTGQQFR (182 aa)) is the YrdC-like domain.

Belongs to the SUA5 family. TsaC subfamily.

The protein resides in the cytoplasm. The catalysed reaction is L-threonine + hydrogencarbonate + ATP = L-threonylcarbamoyladenylate + diphosphate + H2O. Functionally, required for the formation of a threonylcarbamoyl group on adenosine at position 37 (t(6)A37) in tRNAs that read codons beginning with adenine. Catalyzes the conversion of L-threonine, HCO(3)(-)/CO(2) and ATP to give threonylcarbamoyl-AMP (TC-AMP) as the acyladenylate intermediate, with the release of diphosphate. This chain is Threonylcarbamoyl-AMP synthase, found in Marinobacter nauticus (strain ATCC 700491 / DSM 11845 / VT8) (Marinobacter aquaeolei).